The following is a 5289-amino-acid chain: Mucin-2 (5289 aa).

The first 20 residues, 1–20, serve as a signal peptide directing secretion; the sequence is MGLPLARLAAVCLALSLAGG. Ser21 bears the Phosphoserine mark. Residue His34 coordinates Cu(2+). Residues 35–207 form the VWFD 1 domain; that stretch reads NVCSTWGNFH…KINQPDVVCE (173 aa). 29 disulfides stabilise this stretch: Cys37–Cys169, Cys59–Cys206, Cys67–Cys166, Cys218–Cys255, Cys225–Cys250, Cys237–Cys275, Cys257–Cys263, Cys265–Cys291, Cys295–Cys329, Cys308–Cys321, Cys312–Cys351, Cys331–Cys345, Cys353–Cys375, Cys370–Cys387, Cys373–Cys382, Cys391–Cys528, Cys413–Cys563, Cys435–Cys443, Cys574–Cys619, Cys588–Cys614, Cys601–Cys639, Cys621–Cys627, Cys629–Cys654, Cys661–Cys698, Cys674–Cys688, Cys678–Cys718, Cys700–Cys712, Cys720–Cys742, and Cys740–Cys749. Asp49 provides a ligand contact to Ca(2+). Cu(+) contacts are provided by Met146 and Met154. Position 156 (Glu156) interacts with Cu(2+). N-linked (GlcNAc...) asparagine glycosylation occurs at Asn163. 4 residues coordinate Ca(2+): Asp171, Asn173, Leu175, and Glu180. A Cu(2+)-binding site is contributed by His277. A TIL domain is found at 295 to 351; the sequence is CPGNLVYLESGSPCMDTCSHLEVSSLCEEHRMDGCFCPEGTVYDDIGDSGCVPVSQC. Residue His324 participates in Cu(2+) binding. Met326 is a binding site for Cu(+). The region spanning 389-564 is the VWFD 2 domain; it reads GTCALEGGSH…NTWKAQSSCH (176 aa). Asp403 lines the Ca(2+) pocket. N-linked (GlcNAc...) asparagine glycosylation occurs at Asn423. Ca(2+) contacts are provided by Asn530, Asn532, Leu534, Asp537, and Asp538. An N-linked (GlcNAc...) asparagine glycan is attached at Asn670. A glycan (N-linked (GlcNAc...) asparagine) is linked at Asn770. Cystine bridges form between Cys784-Cys820, Cys802-Cys814, Cys822-Cys844, Cys839-Cys856, Cys842-Cys851, Cys860-Cys992, Cys882-Cys1027, Cys891-Cys989, Cys909-Cys916, Cys1037-Cys1080, Cys1051-Cys1075, Cys1062-Cys1102, Cys1082-Cys1090, Cys1092-Cys1117, Cys1108-Cys1137, Cys1121-Cys1163, Cys1145-Cys1187, Cys1167-Cys1181, Cys1189-Cys1213, Cys1208-Cys1238, and Cys1211-Cys1221. The 171-residue stretch at 858-1028 folds into the VWFD 3 domain; the sequence is GTCSIYGSGH…NSWKEAPTCP (171 aa). Asp872 is a Ca(2+) binding site. Asn894 carries an N-linked (GlcNAc...) asparagine glycan. Ca(2+) contacts are provided by Asn994, Asp996, Arg998, Asn1001, and Asp1002. Residues Asn1139 and Asn1154 are each glycosylated (N-linked (GlcNAc...) asparagine). N-linked (GlcNAc...) asparagine glycans are attached at residues Asn1215, Asn1230, and Asn1246. Thr1266, Thr1267, Thr1269, Thr1270, Thr1272, Thr1275, Thr1276, Thr1281, Thr1282, and Thr1287 each carry an O-linked (GalNAc) threonine glycan. O-linked (GalNAc) serine glycosylation is found at Ser1291 and Ser1292. The O-linked (GalNAc) threonine glycan is linked to Thr1293. Residue Ser1296 is glycosylated (O-linked (GalNAc) serine). Residue Thr1297 is glycosylated (O-linked (GalNAc) threonine). 10 residues coordinate Ca(2+): Asn1310, Asp1312, His1313, Ser1316, Asp1319, Gly1321, Asp1322, Glu1324, Asp1381, and Tyr1382. Pro residues-rich tracts occupy residues 1399–1411, 1419–1510, 1520–1549, 1559–1628, and 1638–1679; these read PSPP…PPPT, TTTP…PITP, and TTTP…PPTT. The tract at residues 1399–1773 is disordered; the sequence is PSPPTTTPSP…SITPPTFSPF (375 aa). Repeat copies occupy residues 1401–1416, 1417–1432, 1433–1448, 1449–1464, 1465–1471, and 1472–1478. The segment at 1401-1747 is approximate repeats; the sequence is PPTTTPSPPP…SPPTTTMTTL (347 aa). The stretch at 1479 to 1494 is one 7A repeat; it reads PPTTTPSPPTTTTTTP. The 7B repeat unit spans residues 1495–1517; sequence PPTTTPSPPTTTPITPPASTTTL. One copy of the 8A repeat lies at 1518-1533; that stretch reads PPTTTPSPPTTTTTTP. One copy of the 8B repeat lies at 1534–1556; sequence PPTTTPSPPTTTPITPPTSTTTL. The 9A repeat unit spans residues 1557–1572; it reads PPTTTPSPPPTTTTTP. The 9B repeat unit spans residues 1573-1596; that stretch reads PPTTTPSPPTTTTPSPPTITTTTP. A 10A repeat occupies 1597–1612; it reads PPTTTPSPPTTTTTTP. The 10B repeat unit spans residues 1613–1635; the sequence is PPTTTPSPPTTTPITPPTSTTTL. The 11A repeat unit spans residues 1636–1651; the sequence is PPTTTPSPPPTTTTTP. The 11B repeat unit spans residues 1652–1675; that stretch reads PPTTTPSPPTTTTPSPPITTTTTP. Repeat copies occupy residues 1676-1683, 1684-1699, 1700-1715, 1716-1731, and 1732-1747. Low complexity-rich tracts occupy residues 1680–1720 and 1741–1759; these read TPSS…STTT and TTTM…LTTT. The segment covering 1760–1770 has biased composition (pro residues); that stretch reads PLPPSITPPTF. Residues Asn1787 and Asn1820 are each glycosylated (N-linked (GlcNAc...) asparagine). 4 stretches are compositionally biased toward low complexity: residues 1885-2158, 2165-4238, 4269-4315, and 4329-4430; these read MTTT…TMVT, GTQT…QTPT, TTVT…STAP, and STPQ…PSII. Disordered stretches follow at residues 1885–4238 and 4269–4430; these read MTTT…QTPT and TTVT…PSII. 4 N-linked (GlcNAc...) asparagine glycosylation sites follow: Asn4449, Asn4461, Asn4472, and Asn4483. The tract at residues 4492–4524 is disordered; sequence PTPTPSKSTPTPSKPSSTPSKPTPGTKPPECPD. Positions 4496 to 4511 are enriched in low complexity; sequence PSKSTPTPSKPSSTPS. Residues 4512 to 4522 are compositionally biased toward pro residues; that stretch reads KPTPGTKPPEC. N-linked (GlcNAc...) asparagine glycosylation is found at Asn4532, Asn4548, and Asn4612. Positions 4589–4772 constitute a VWFD 4 domain; the sequence is CYCTGWGDPH…VNDPSKPHCP (184 aa). Disulfide bonds link Cys4591/Cys4732, Cys4613/Cys4771, and Cys4637/Cys4645. 2 N-linked (GlcNAc...) asparagine glycosylation sites follow: Asn4726 and Asn4737. Residues 4770–4795 form a disordered region; sequence HCPHSSSTTKRPAVTVPGGGKTTPHK. Asn4862, Asn4897, Asn4991, Asn4998, Asn5065, Asn5080, Asn5129, Asn5148, and Asn5179 each carry an N-linked (GlcNAc...) asparagine glycan. Positions 4927 to 4996 constitute a VWFC 1 domain; that stretch reads CVGPDNVPRE…DTCCNITVCK (70 aa). Positions 5034–5101 constitute a VWFC 2 domain; it reads GVCVHGNAEY…APGECCKKCE (68 aa). 4 cysteine pairs are disulfide-bonded: Cys5185–Cys5232, Cys5199–Cys5246, Cys5208–Cys5262, and Cys5212–Cys5264. Residues 5185–5270 form the CTCK domain; the sequence is CSTVPVTTEV…SCQCQDTVCG (86 aa).

Homomultimer; disulfide-linked. The N- and C-terminus mediate their assembly into higher order structures to form filaments. The CTCK domains of two polypeptides associate in the endoplasmic reticulum to generate intermolecularly disulfide-bonded dimers. These dimers progress to the Golgi apparatus, which is a more acidic environment than the endoplasmic reticulum. Under acidic conditions, the N-termini form non-covalent intermolecular interactions that juxtapose assemblies of the third VWD domain (VWD3) from different CTCK-linked dimers. The VWD3 assemblies then become disulfide bonded to one another to produce long, disulfide-linked polymers that remain highly compact until secretion. Interacts with FCGBP. Interacts with AGR2; disulfide-linked. In terms of assembly, (Microbial infection) Interacts in vitro with L.monocytogenes internalin proteins InlB, InlC and InlJ; for InlC binding is slightly better at pH 5.5, (the pH of the intestine) than at pH 7.4. O-glycosylated. O-glycosylation is required for mucin assembly. Goblet cells synthesize two forms of mucin that differ in branched chain O-glycosylation and the site of production in the colon. In terms of processing, may undergo proteolytic cleavage in the outer mucus layer of the colon, contributing to the expanded volume and loose nature of this layer which allows for bacterial colonization in contrast to the inner mucus layer which is dense and devoid of bacteria. Post-translationally, at low pH of 6 and under, undergoes autocatalytic cleavage in vitro in the N-terminal region of the fourth VWD domain. It is likely that this also occurs in vivo and is triggered by the low pH of the late secretory pathway. In terms of tissue distribution, colon, small intestine, colonic tumors, bronchus, cervix and gall bladder.

The protein resides in the secreted. Coats the epithelia of the intestines and other mucus membrane-containing organs to provide a protective, lubricating barrier against particles and infectious agents at mucosal surfaces. Major constituent of the colon mucus, which is mainly formed by large polymeric networks of MUC2 secreted by goblet cells that cover the exposed surfaces of intestine. MUC2 networks form hydrogels that guard the underlying epithelium from pathogens and other hazardous matter entering from the outside world, while permitting nutrient absorption and gas exchange. Acts as a divalent copper chaperone that protects intestinal cells from copper toxicity and facilitates nutritional copper unptake into cells. Binds both Cu(2+) and its reduced form, Cu(1+), at two juxtaposed binding sites: Cu(2+), once reduced to Cu(1+) by vitamin C (ascorbate) or other dietary antioxidants, transits to the other binding site. MUC2-bound Cu(1+) is protected from oxidation in aerobic environments, and can be released for nutritional delivery to cells. Mucin gels store antimicrobial molecules that participate in innate immunity. Mucin glycoproteins also house and feed the microbiome, lubricate tissue surfaces, and may facilitate the removal of contaminants and waste products from the body. Goblet cells synthesize two forms of MUC2 mucin that differ in branched chain O-glycosylation and the site of production in the colon: a (1) 'thick' mucus that wraps the microbiota to form fecal pellets is produced in the proximal, ascending colon. 'Thick' mucus transits along the descending colon and is lubricated by a (2) 'thin' MUC2 mucus produced in the distal colon which adheres to the 'thick' mucus. This chain is Mucin-2, found in Homo sapiens (Human).